Here is a 37-residue protein sequence, read N- to C-terminus: Large ribosomal subunit protein bL36c (37 aa).

This sequence belongs to the bacterial ribosomal protein bL36 family.

It localises to the plastid. It is found in the chloroplast. This Gnetum parvifolium (Small-leaved jointfir) protein is Large ribosomal subunit protein bL36c.